Here is a 123-residue protein sequence, read N- to C-terminus: MSPSPFKGQTGLKRILNATGYSLAGFLAAFRGEAAFRQLVLLNVVLIPVAFLLDVSRGERALMIAVCLLALIVELLNSAIEATVDRVSLERHPLSKNAKDMGSAAQFVALTVITVTWATILLG.

A helical membrane pass occupies residues 15–32 (ILNATGYSLAGFLAAFRG). E33 contacts a divalent metal cation. Helical transmembrane passes span 35–55 (AFRQ…LLDV), 61–81 (ALMI…SAIE), and 102–122 (GSAA…TILL). The Proton acceptor role is filled by E74. Residue E81 participates in a divalent metal cation binding.

The protein belongs to the bacterial diacylglycerol kinase family. Mg(2+) serves as cofactor.

It is found in the cell inner membrane. The catalysed reaction is a 1,2-diacyl-sn-glycerol + ATP = a 1,2-diacyl-sn-glycero-3-phosphate + ADP + H(+). Functionally, catalyzes the ATP-dependent phosphorylation of sn-l,2-diacylglycerol (DAG) to phosphatidic acid. Involved in the recycling of diacylglycerol produced as a by-product during membrane-derived oligosaccharide (MDO) biosynthesis. The sequence is that of Diacylglycerol kinase (dgkA) from Pseudomonas aeruginosa (strain ATCC 15692 / DSM 22644 / CIP 104116 / JCM 14847 / LMG 12228 / 1C / PRS 101 / PAO1).